Reading from the N-terminus, the 276-residue chain is 3-methyl-2-oxobutanoate hydroxymethyltransferase (276 aa).

The Mg(2+) site is built by Asp45 and Asp84. Residues 45 to 46, Asp84, and Lys114 contribute to the 3-methyl-2-oxobutanoate site; that span reads DS. Glu116 provides a ligand contact to Mg(2+). Catalysis depends on Glu183, which acts as the Proton acceptor.

Belongs to the PanB family. In terms of assembly, homodecamer; pentamer of dimers. It depends on Mg(2+) as a cofactor.

The protein localises to the cytoplasm. It catalyses the reaction 3-methyl-2-oxobutanoate + (6R)-5,10-methylene-5,6,7,8-tetrahydrofolate + H2O = 2-dehydropantoate + (6S)-5,6,7,8-tetrahydrofolate. It participates in cofactor biosynthesis; (R)-pantothenate biosynthesis; (R)-pantoate from 3-methyl-2-oxobutanoate: step 1/2. Functionally, catalyzes the reversible reaction in which hydroxymethyl group from 5,10-methylenetetrahydrofolate is transferred onto alpha-ketoisovalerate to form ketopantoate. The chain is 3-methyl-2-oxobutanoate hydroxymethyltransferase from Carboxydothermus hydrogenoformans (strain ATCC BAA-161 / DSM 6008 / Z-2901).